A 389-amino-acid chain; its full sequence is MKIDSWLNERLDRMKEAGVHRNLRSMDGAPVPERNIDGENQTVWSSNNYLGLASDRRLIDAAQTALQQFGTGSSGSRLTTGNSVWHEKLEKKIASFKLTEAALLFSSGYLANVGVLSSLPEKEDVILSDQLNHASMIDGCRLSKADTVVYRHIDMNDLENKLNETQRYQRRFIVTDGVFSMDGTIAPLDQIISLAKRYHAFVVVDDAHATGVLGDSGQGTSEYFGVCPDIVIGTLSKAVGAEGGFAAGSAVFIDFLLNHARTFIFQTAIPPASCAAAHEAFNIIEASREKRQLLFSYISMIRTSLKNMGYVVKGDHTPIIPVVIGDAHKTVLFAEKLQGKGIYAPAIRPPTVAPGESRIRITITSDHSMGDIDHLLQTFHSIGKELHII.

Substrate is bound at residue arginine 21. 108-109 (GY) lines the pyridoxal 5'-phosphate pocket. Histidine 133 contributes to the substrate binding site. Pyridoxal 5'-phosphate-binding positions include serine 180, 205–208 (DDAH), and 234–237 (TLSK). Lysine 237 carries the N6-(pyridoxal phosphate)lysine modification. Residue threonine 351 participates in substrate binding.

This sequence belongs to the class-II pyridoxal-phosphate-dependent aminotransferase family. BioF subfamily. In terms of assembly, homodimer. Pyridoxal 5'-phosphate is required as a cofactor.

It carries out the reaction 6-carboxyhexanoyl-[ACP] + L-alanine + H(+) = (8S)-8-amino-7-oxononanoate + holo-[ACP] + CO2. It participates in cofactor biosynthesis; biotin biosynthesis. In terms of biological role, catalyzes the decarboxylative condensation of pimeloyl-[acyl-carrier protein] and L-alanine to produce 8-amino-7-oxononanoate (AON), [acyl-carrier protein], and carbon dioxide. This Bacillus subtilis (strain 168) protein is 8-amino-7-oxononanoate synthase 2 (bioF).